The chain runs to 508 residues: UTP--glucose-1-phosphate uridylyltransferase (508 aa).

Ser2 carries the post-translational modification N-acetylserine. Ser2 and Ser13 each carry phosphoserine. UTP is bound by residues 113–116 (LNGG), Lys127, Gln190, and Gly222. Residue 115-116 (GG) participates in substrate binding. Lys127 provides a ligand contact to Mg(2+). Residues His223, 251–253 (NID), and Asn330 each bind substrate. Asp253 provides a ligand contact to UTP. Residue Asp253 coordinates Mg(2+). Lys396 is a UTP binding site. Lys396 is an active-site residue. Position 426 is a phosphothreonine (Thr426). Phosphoserine is present on Ser434. Lys438 carries the N6-acetyllysine modification. A phosphoserine mark is found at Ser448 and Ser461. The interval 457–508 (HLTVSGDVTFGKNVSLKGTVIIIANHGDRIDIPPGAVLENKIVSGNLRILDH) is oligomerization. Residues 502–503 (NL) are critical for end-to-end subunit interaction.

It belongs to the UDPGP type 1 family. As to quaternary structure, homooctamer. As to expression, highly expressed in various brain regions. Expressed in amygdala, anterior cingulate cortex, caudate, cerebellar hemisphere, cerebellum, cortex, frontal cortex, hippocampus, hypothalamus, nucleus accumbens, putamen, spinal cord and substantia nigra. Also widely expressed among other tissues, including liver, heart, placenta, lung, kidney, pancreas and skeletal muscle.

It is found in the cytoplasm. The catalysed reaction is alpha-D-glucose 1-phosphate + UTP + H(+) = UDP-alpha-D-glucose + diphosphate. It participates in glycan biosynthesis; glycogen biosynthesis. Functionally, UTP--glucose-1-phosphate uridylyltransferase catalyzing the conversion of glucose-1-phosphate into UDP-glucose, a crucial precursor for the production of glycogen. This Homo sapiens (Human) protein is UTP--glucose-1-phosphate uridylyltransferase.